The following is an 831-amino-acid chain: Pleckstrin homology-like domain family B member 1 (831 aa).

The span at 1–11 (LTLGARGRRTR) shows a compositional bias: basic residues. Positions 1 to 73 (LTLGARGRRT…PIPRERKNSI (73 aa)) are disordered. Residue Arg-6 is modified to Omega-N-methylarginine. A phosphoserine mark is found at Ser-12 and Ser-14. Thr-16 is subject to Phosphothreonine. Ser-27, Ser-33, Ser-45, Ser-49, Ser-57, Ser-72, Ser-77, and Ser-175 each carry phosphoserine. A compositionally biased stretch (polar residues) spans 39–51 (GSLTGASPRQSPH). 2 disordered regions span residues 160–209 (RSGE…LQGE) and 416–465 (NGDM…QNGT). The span at 174–188 (ESMERSDEENLKEEC) shows a compositional bias: basic and acidic residues. The stretch at 180 to 306 (DEENLKEECS…TETKLFEDLE (127 aa)) forms a coiled coil. Phosphoserine occurs at positions 421 and 467. The segment covering 421–442 (SPLPRTRSGPLPSSSGSSSSSS) has biased composition (low complexity). Positions 584–603 (SMETSISTGGNSACSPDNMS) are disordered. A coiled-coil region spans residues 610-676 (MGKIEEMEKM…QQLVEKEVKL (67 aa)). The PH domain maps to 721-824 (SKVCRGYLIK…WMDVIVTGAE (104 aa)).

This is Pleckstrin homology-like domain family B member 1 (Phldb1) from Rattus norvegicus (Rat).